Reading from the N-terminus, the 688-residue chain is Potassium-transporting ATPase ATP-binding subunit (688 aa).

The next 4 membrane-spanning stretches (helical) occupy residues 35-55 (VMFV…AMLA), 62-82 (ALFT…ANFA), 219-239 (IALT…CVTL), and 260-280 (VLIA…LSAI). Asp-313 functions as the 4-aspartylphosphate intermediate in the catalytic mechanism. ATP-binding positions include Asp-350, Glu-354, 383–390 (FSAMTRMS), and Lys-401. Mg(2+) is bound by residues Asp-524 and Asp-528. Helical transmembrane passes span 594–614 (FAII…LNIM), 622–642 (AVLS…PLAL), and 667–687 (GLIA…LLIL).

The protein belongs to the cation transport ATPase (P-type) (TC 3.A.3) family. Type IA subfamily. As to quaternary structure, the system is composed of three essential subunits: KdpA, KdpB and KdpC.

The protein localises to the cell inner membrane. The catalysed reaction is K(+)(out) + ATP + H2O = K(+)(in) + ADP + phosphate + H(+). Its function is as follows. Part of the high-affinity ATP-driven potassium transport (or Kdp) system, which catalyzes the hydrolysis of ATP coupled with the electrogenic transport of potassium into the cytoplasm. This subunit is responsible for energy coupling to the transport system and for the release of the potassium ions to the cytoplasm. This is Potassium-transporting ATPase ATP-binding subunit from Photorhabdus laumondii subsp. laumondii (strain DSM 15139 / CIP 105565 / TT01) (Photorhabdus luminescens subsp. laumondii).